Here is a 204-residue protein sequence, read N- to C-terminus: uncharacterized protein (204 aa).

A coiled-coil region spans residues 109-136; it reads QFDIDVHKDQIEKLKDLYKALLRIAETT.

This is an uncharacterized protein from Bacillus subtilis (strain 168).